Reading from the N-terminus, the 605-residue chain is Elongation factor 4 (605 aa).

The tr-type G domain maps to 4–181; it reads NKIKTFSIIA…AIVEYVPSPL (178 aa). GTP-binding positions include 16–21 and 128–131; these read DHGKST and NKVD.

Belongs to the TRAFAC class translation factor GTPase superfamily. Classic translation factor GTPase family. LepA subfamily.

Its subcellular location is the cell membrane. It carries out the reaction GTP + H2O = GDP + phosphate + H(+). Required for accurate and efficient protein synthesis under certain stress conditions. May act as a fidelity factor of the translation reaction, by catalyzing a one-codon backward translocation of tRNAs on improperly translocated ribosomes. Back-translocation proceeds from a post-translocation (POST) complex to a pre-translocation (PRE) complex, thus giving elongation factor G a second chance to translocate the tRNAs correctly. Binds to ribosomes in a GTP-dependent manner. This is Elongation factor 4 from Mycoplasmopsis synoviae (strain 53) (Mycoplasma synoviae).